The primary structure comprises 35 residues: MEALVYTFLLVSTLGIIFFAIFFREPPKVPTKKLK.

Residues 3–23 (ALVYTFLLVSTLGIIFFAIFF) form a helical membrane-spanning segment.

Belongs to the PsbT family. PSII is composed of 1 copy each of membrane proteins PsbA, PsbB, PsbC, PsbD, PsbE, PsbF, PsbH, PsbI, PsbJ, PsbK, PsbL, PsbM, PsbT, PsbY, PsbZ, Psb30/Ycf12, at least 3 peripheral proteins of the oxygen-evolving complex and a large number of cofactors. It forms dimeric complexes.

Its subcellular location is the plastid. It localises to the chloroplast thylakoid membrane. Its function is as follows. Found at the monomer-monomer interface of the photosystem II (PS II) dimer, plays a role in assembly and dimerization of PSII. PSII is a light-driven water plastoquinone oxidoreductase, using light energy to abstract electrons from H(2)O, generating a proton gradient subsequently used for ATP formation. In Ceratophyllum demersum (Rigid hornwort), this protein is Photosystem II reaction center protein T.